The primary structure comprises 144 residues: UPF0306 protein Spro_0510 (144 aa).

It belongs to the UPF0306 family.

This chain is UPF0306 protein Spro_0510, found in Serratia proteamaculans (strain 568).